Consider the following 500-residue polypeptide: Glycerol kinase (500 aa).

T11 is an ADP binding site. Residues T11, T12, and S13 each coordinate ATP. T11 contributes to the sn-glycerol 3-phosphate binding site. R15 is a binding site for ADP. Positions 81, 82, 133, and 242 each coordinate sn-glycerol 3-phosphate. Positions 81, 82, 133, 242, and 243 each coordinate glycerol. ADP-binding residues include T264 and G307. The ATP site is built by T264, G307, Q311, and G411. G411 is a binding site for ADP.

It belongs to the FGGY kinase family.

It carries out the reaction glycerol + ATP = sn-glycerol 3-phosphate + ADP + H(+). It participates in polyol metabolism; glycerol degradation via glycerol kinase pathway; sn-glycerol 3-phosphate from glycerol: step 1/1. Its activity is regulated as follows. Inhibited by fructose 1,6-bisphosphate (FBP). Functionally, key enzyme in the regulation of glycerol uptake and metabolism. Catalyzes the phosphorylation of glycerol to yield sn-glycerol 3-phosphate. This chain is Glycerol kinase, found in Bradyrhizobium sp. (strain ORS 278).